Reading from the N-terminus, the 705-residue chain is Lethal(3)malignant brain tumor-like protein 2 (705 aa).

The tract at residues 1–84 (MEKPRSIEET…GTPRSLDGSG (84 aa)) is disordered. A Phosphoserine modification is found at Ser13. Acidic residues predominate over residues 15-25 (PMEEEEDDDLE). Low complexity predominate over residues 38–49 (SSVGSESSSYLE). Acidic residues predominate over residues 50–60 (ESSEAENEDRE). Phosphoserine is present on Ser67. The residue at position 76 (Thr76) is a Phosphothreonine. The FCS-type zinc-finger motif lies at 81–116 (DGSGSEPAVCEMCGIVGTREAFFSKTKRFCSVSCSR). Residues Cys90, Cys93, Cys110, and Cys114 each coordinate Zn(2+). 4 MBT repeats span residues 179 to 283 (FDWG…LVPP), 291 to 391 (TDWK…IKMS), 397 to 500 (MAHH…LTPP), and 508 to 604 (FNWE…LQPP). Position 338 is a phosphoserine (Ser338). Lys405 participates in a covalent cross-link: Glycyl lysine isopeptide (Lys-Gly) (interchain with G-Cter in SUMO2). Residues 608–665 (EPATPLKAKEATKKKKKQFGKKRKRIPPTKTRPLRQGSKKPLLEDDPQGARKISSEPV) form a disordered region. Residues 619–634 (TKKKKKQFGKKRKRIP) are compositionally biased toward basic residues. Residues Lys647, Lys659, and Lys675 each participate in a glycyl lysine isopeptide (Lys-Gly) (interchain with G-Cter in SUMO2) cross-link. Residues 680–705 (DVASPDKASSPELPVSVENIKQETDD) form a disordered region. Residues Ser683, Ser688, and Ser689 each carry the phosphoserine modification. Lys700 participates in a covalent cross-link: Glycyl lysine isopeptide (Lys-Gly) (interchain with G-Cter in SUMO1); alternate. A Glycyl lysine isopeptide (Lys-Gly) (interchain with G-Cter in SUMO2); alternate cross-link involves residue Lys700.

Part of the E2F6.com-1 complex in G0 phase composed of E2F6, MGA, MAX, TFDP1, CBX3, BAT8, EUHMTASE1, RING1, RNF2, MBLR, BAT8 and YAF2.

It is found in the nucleus. In terms of biological role, putative Polycomb group (PcG) protein. PcG proteins maintain the transcriptionally repressive state of genes, probably via a modification of chromatin, rendering it heritably changed in its expressibility. Its association with a chromatin-remodeling complex suggests that it may contribute to prevent expression of genes that trigger the cell into mitosis. Binds to monomethylated and dimethylated 'Lys-20' on histone H4. Binds histone H3 peptides that are monomethylated or dimethylated on 'Lys-4', 'Lys-9' or 'Lys-27'. This Homo sapiens (Human) protein is Lethal(3)malignant brain tumor-like protein 2 (L3MBTL2).